Reading from the N-terminus, the 323-residue chain is RING-H2 finger protein ATL32 (323 aa).

An N-terminal signal peptide occupies residues 1–28 (MMTRVECFNPHRWIILHVAIIIQSKANA). A helical membrane pass occupies residues 47–67 (TTVFAVLVTLFFLTGLLSVYI). The RING-type; atypical zinc-finger motif lies at 124-166 (CAICLNELEDHETVRLLPICNHLFHIDCIDTWLYSHATCPVCR). The tract at residues 210–229 (SSEISGKFPRSNSTGHSMDR) is disordered.

Belongs to the RING-type zinc finger family. ATL subfamily.

The protein resides in the membrane. The catalysed reaction is S-ubiquitinyl-[E2 ubiquitin-conjugating enzyme]-L-cysteine + [acceptor protein]-L-lysine = [E2 ubiquitin-conjugating enzyme]-L-cysteine + N(6)-ubiquitinyl-[acceptor protein]-L-lysine.. It functions in the pathway protein modification; protein ubiquitination. This Arabidopsis thaliana (Mouse-ear cress) protein is RING-H2 finger protein ATL32 (ATL32).